Reading from the N-terminus, the 416-residue chain is Multifunctional CCA protein (416 aa).

2 residues coordinate ATP: Gly-8 and Arg-11. Residues Gly-8 and Arg-11 each contribute to the CTP site. Asp-21 and Asp-23 together coordinate Mg(2+). Residues Arg-91, Arg-138, and Arg-141 each coordinate ATP. Arg-91, Arg-138, and Arg-141 together coordinate CTP. An HD domain is found at 229–331 (TGLHQELVSD…YELLQRCDAF (103 aa)).

This sequence belongs to the tRNA nucleotidyltransferase/poly(A) polymerase family. Bacterial CCA-adding enzyme type 1 subfamily. As to quaternary structure, monomer. Can also form homodimers and oligomers. It depends on Mg(2+) as a cofactor. Requires Ni(2+) as cofactor.

The catalysed reaction is a tRNA precursor + 2 CTP + ATP = a tRNA with a 3' CCA end + 3 diphosphate. It carries out the reaction a tRNA with a 3' CCA end + 2 CTP + ATP = a tRNA with a 3' CCACCA end + 3 diphosphate. Catalyzes the addition and repair of the essential 3'-terminal CCA sequence in tRNAs without using a nucleic acid template. Adds these three nucleotides in the order of C, C, and A to the tRNA nucleotide-73, using CTP and ATP as substrates and producing inorganic pyrophosphate. tRNA 3'-terminal CCA addition is required both for tRNA processing and repair. Also involved in tRNA surveillance by mediating tandem CCA addition to generate a CCACCA at the 3' terminus of unstable tRNAs. While stable tRNAs receive only 3'-terminal CCA, unstable tRNAs are marked with CCACCA and rapidly degraded. The chain is Multifunctional CCA protein from Xylella fastidiosa (strain M12).